Here is a 287-residue protein sequence, read N- to C-terminus: HTH-type transcriptional regulator MurR (287 aa).

One can recognise an HTH rpiR-type domain in the interval 1-77 (MLYLAKMRNA…MALIEEYSVN (77 aa)). A DNA-binding region (H-T-H motif) is located at residues 37–56 (SRNLAKQLEVSQSSIVKFAQ). The region spanning 128–268 (VINLISKARL…FVGMVQLNDV (141 aa)) is the SIS domain.

Homotetramer.

It functions in the pathway amino-sugar metabolism; N-acetylmuramate degradation [regulation]. In terms of biological role, represses the expression of the murPQ operon involved in the uptake and degradation of N-acetylmuramic acid (MurNAc). Binds to two adjacent inverted repeats within the operator region. MurNAc 6-phosphate, the substrate of MurQ, is the specific inducer that weakens binding of MurR to the operator. The polypeptide is HTH-type transcriptional regulator MurR (Citrobacter koseri (strain ATCC BAA-895 / CDC 4225-83 / SGSC4696)).